The chain runs to 149 residues: Large ribosomal subunit protein bL9 (149 aa).

The protein belongs to the bacterial ribosomal protein bL9 family.

Binds to the 23S rRNA. The protein is Large ribosomal subunit protein bL9 of Helicobacter pylori (strain HPAG1).